The following is a 391-amino-acid chain: Steroid side-chain-cleaving aldolase (391 aa).

Tyr-294 serves as the catalytic Proton acceptor. Tyr-344 functions as the Proton donor in the catalytic mechanism.

Belongs to the thiolase-like superfamily. Homodimer. Interacts with the ChsH1/ChsH2 hydratase via the DUF35 C-terminal region of ChsH2 (ChsH2-DUF35).

The enzyme catalyses 17-hydroxy-3-oxochol-4-en-22-oyl-CoA = androst-4-ene-3,17-dione + propanoyl-CoA. In terms of biological role, probably involved in bile acid degradation. In vitro, when associated with the ChsH1/ChsH2 hydratase, catalyzes the retroaldol cleavage of 17-hydroxy-3-oxo-4-pregnene-20-carboxyl-CoA (17-HOPC-CoA), forming androst-4-ene-3,17-dione and propionyl-CoA. The in vivo substrate is probably a closely analogous bile acid degradation metabolite. This Thermomonospora curvata (strain ATCC 19995 / DSM 43183 / JCM 3096 / KCTC 9072 / NBRC 15933 / NCIMB 10081 / Henssen B9) protein is Steroid side-chain-cleaving aldolase.